A 141-amino-acid polypeptide reads, in one-letter code: Large ribosomal subunit protein uL16c (141 aa).

Residues 1-17 are compositionally biased toward basic residues; that stretch reads MLSPRRTKYRKQHRGRL. The tract at residues 1-20 is disordered; sequence MLSPRRTKYRKQHRGRLKGT.

The protein belongs to the universal ribosomal protein uL16 family. In terms of assembly, part of the 50S ribosomal subunit.

It localises to the plastid. Its subcellular location is the chloroplast. This Staurastrum punctulatum (Green alga) protein is Large ribosomal subunit protein uL16c.